The sequence spans 364 residues: tRNA 2-selenouridine synthase (364 aa).

The 124-residue stretch at 14 to 137 folds into the Rhodanese domain; the sequence is LIADTPIIDV…LRQTAIQATI (124 aa). Cysteine 97 acts as the S-selanylcysteine intermediate in catalysis.

This sequence belongs to the SelU family. In terms of assembly, monomer.

The catalysed reaction is 5-methylaminomethyl-2-thiouridine(34) in tRNA + selenophosphate + (2E)-geranyl diphosphate + H2O + H(+) = 5-methylaminomethyl-2-selenouridine(34) in tRNA + (2E)-thiogeraniol + phosphate + diphosphate. The enzyme catalyses 5-methylaminomethyl-2-thiouridine(34) in tRNA + (2E)-geranyl diphosphate = 5-methylaminomethyl-S-(2E)-geranyl-thiouridine(34) in tRNA + diphosphate. It catalyses the reaction 5-methylaminomethyl-S-(2E)-geranyl-thiouridine(34) in tRNA + selenophosphate + H(+) = 5-methylaminomethyl-2-(Se-phospho)selenouridine(34) in tRNA + (2E)-thiogeraniol. It carries out the reaction 5-methylaminomethyl-2-(Se-phospho)selenouridine(34) in tRNA + H2O = 5-methylaminomethyl-2-selenouridine(34) in tRNA + phosphate. Functionally, involved in the post-transcriptional modification of the uridine at the wobble position (U34) of tRNA(Lys), tRNA(Glu) and tRNA(Gln). Catalyzes the conversion of 2-thiouridine (S2U-RNA) to 2-selenouridine (Se2U-RNA). Acts in a two-step process involving geranylation of 2-thiouridine (S2U) to S-geranyl-2-thiouridine (geS2U) and subsequent selenation of the latter derivative to 2-selenouridine (Se2U) in the tRNA chain. The polypeptide is tRNA 2-selenouridine synthase (Escherichia coli (strain ATCC 8739 / DSM 1576 / NBRC 3972 / NCIMB 8545 / WDCM 00012 / Crooks)).